A 330-amino-acid polypeptide reads, in one-letter code: MSIHSPGYTVRRIPVNNVTDTTMFILTGFTDDADLQVLLFLLFFVIYLFTLIGNLGLVLLVIGDSRLHNPMYYFLSVLSFLDACYSTVVTPKMLVNFISNDKSISYPGCVTEMFLFVTFGTTECFLLAAMAYDRFVAIYNPLLYAVKMSPRVYIPLIIACYSGGIMHATIHTVATFSLSFCASNEIRHVFCDIPPLLAISCSNTNINQLLLFYCVGSIEIITILIVLVSYSFILFAILKMNSAEGRRKIFSTCGSHLTGVSIYHGTILFMYVRPSSNYALEHDMIVSTFYTIVIPMLNPIIYSLRNKDVKEAMKKIFERNFFMNKVHFKL.

Over Met-1–Val-37 the chain is Extracellular. The N-linked (GlcNAc...) asparagine glycan is linked to Asn-17. Residues Leu-38–Val-58 traverse the membrane as a helical segment. Residues Leu-59–Arg-66 lie on the Cytoplasmic side of the membrane. Residues Leu-67–Thr-87 form a helical membrane-spanning segment. The Extracellular portion of the chain corresponds to Val-88–Thr-111. An intrachain disulfide couples Cys-109 to Cys-201. A helical membrane pass occupies residues Glu-112–Tyr-132. Topologically, residues Asp-133–Ala-145 are cytoplasmic. The chain crosses the membrane as a helical span at residues Val-146–Met-166. Residues His-167 to Gln-208 are Extracellular-facing. The helical transmembrane segment at Leu-209–Ser-229 threads the bilayer. Over Tyr-230–Ile-249 the chain is Cytoplasmic. The chain crosses the membrane as a helical span at residues Phe-250–Met-270. The Extracellular portion of the chain corresponds to Tyr-271–Asp-283. A helical membrane pass occupies residues Met-284–Leu-304. Residues Arg-305 to Leu-330 are Cytoplasmic-facing.

Belongs to the G-protein coupled receptor 1 family.

It is found in the cell membrane. Potential odorant receptor. The sequence is that of Olfactory receptor 5T9 from Mus musculus (Mouse).